We begin with the raw amino-acid sequence, 339 residues long: Glycerol-3-phosphate dehydrogenase [NAD(P)+] (339 aa).

Positions 15, 16, 36, and 110 each coordinate NADPH. K110, G139, and T141 together coordinate sn-glycerol 3-phosphate. Residue A143 coordinates NADPH. Positions 195, 248, 258, 259, and 260 each coordinate sn-glycerol 3-phosphate. Catalysis depends on K195, which acts as the Proton acceptor. R259 lines the NADPH pocket. The NADPH site is built by V283 and E285.

This sequence belongs to the NAD-dependent glycerol-3-phosphate dehydrogenase family.

Its subcellular location is the cytoplasm. It carries out the reaction sn-glycerol 3-phosphate + NAD(+) = dihydroxyacetone phosphate + NADH + H(+). The catalysed reaction is sn-glycerol 3-phosphate + NADP(+) = dihydroxyacetone phosphate + NADPH + H(+). The protein operates within membrane lipid metabolism; glycerophospholipid metabolism. Functionally, catalyzes the reduction of the glycolytic intermediate dihydroxyacetone phosphate (DHAP) to sn-glycerol 3-phosphate (G3P), the key precursor for phospholipid synthesis. This is Glycerol-3-phosphate dehydrogenase [NAD(P)+] from Shigella dysenteriae serotype 1 (strain Sd197).